The chain runs to 316 residues: Protoheme IX farnesyltransferase (316 aa).

9 helical membrane-spanning segments follow: residues 34–54, 55–75, 95–115, 118–138, 155–175, 182–202, 228–250, 254–273, and 287–307; these read VMSLVVFTAFAGLVLAPGHIN, PFIGFTAILCIAIGAGASGAL, IPAGKILPQEALAFGLTLSAF, IILGLAVHWLAAGLLAFTIFF, IVIGGAAGAFPPMIGWACVTG, IVLFLIIFLWTPAHFWALALF, IVIYAVLTAVSGVCPTLLGFASL, AFATVMGLGFVWYSLGVLRM, and FAFSIAYLFAIFSALLVDYAI.

This sequence belongs to the UbiA prenyltransferase family. Protoheme IX farnesyltransferase subfamily.

It is found in the cell inner membrane. It carries out the reaction heme b + (2E,6E)-farnesyl diphosphate + H2O = Fe(II)-heme o + diphosphate. The protein operates within porphyrin-containing compound metabolism; heme O biosynthesis; heme O from protoheme: step 1/1. In terms of biological role, converts heme B (protoheme IX) to heme O by substitution of the vinyl group on carbon 2 of heme B porphyrin ring with a hydroxyethyl farnesyl side group. The sequence is that of Protoheme IX farnesyltransferase from Rhizobium meliloti (strain 1021) (Ensifer meliloti).